A 715-amino-acid chain; its full sequence is Polyribonucleotide nucleotidyltransferase (715 aa).

2 residues coordinate Mg(2+): Asp488 and Asp494. The 60-residue stretch at 555–614 (PRIEVMHIPTDKIRDVIGSGGKVIREIVEKTGAKINIEDDGTVKIASSNAKEIEAAKKWI) folds into the KH domain. The 69-residue stretch at 624–692 (GEIYEGTVVK…ERGKVRLSMK (69 aa)) folds into the S1 motif domain.

The protein belongs to the polyribonucleotide nucleotidyltransferase family. Requires Mg(2+) as cofactor.

It localises to the cytoplasm. It catalyses the reaction RNA(n+1) + phosphate = RNA(n) + a ribonucleoside 5'-diphosphate. In terms of biological role, involved in mRNA degradation. Catalyzes the phosphorolysis of single-stranded polyribonucleotides processively in the 3'- to 5'-direction. This is Polyribonucleotide nucleotidyltransferase from Mesorhizobium japonicum (strain LMG 29417 / CECT 9101 / MAFF 303099) (Mesorhizobium loti (strain MAFF 303099)).